A 155-amino-acid chain; its full sequence is Gas vesicle protein K (155 aa).

The protein belongs to the gas vesicle GvpK family.

It localises to the gas vesicle. In terms of biological role, might be involved in nucleating gas vesicle formation. Gas vesicles (GV) are hollow, gas filled proteinaceous nanostructures. During planktonic growth they allow positioning of the organism at a favorable depth for light or nutrient acquisition. Cluster expression in E.coli (gvpA1-gvpA2-gvpC-gvpN-gvpJ-gvpK-gvpF-gvpG-gvpV-gvpW) allows cells to float and produces irregularly shaped gas vesicles. The sequence is that of Gas vesicle protein K from Nostoc sp. (strain PCC 7120 / SAG 25.82 / UTEX 2576).